The chain runs to 130 residues: Small ribosomal subunit protein uS11 (130 aa).

Belongs to the universal ribosomal protein uS11 family. Part of the 30S ribosomal subunit. Interacts with proteins S7 and S18. Binds to IF-3.

Functionally, located on the platform of the 30S subunit, it bridges several disparate RNA helices of the 16S rRNA. Forms part of the Shine-Dalgarno cleft in the 70S ribosome. This is Small ribosomal subunit protein uS11 from Synechococcus sp. (strain CC9902).